The following is a 662-amino-acid chain: MKSEPTSLDFTSSNLRRMNRDHSSNNTNRTVLNLPKEILIIIFSFLDPRSLLSAQCTCKYWKKLLSDDLSWRTAFFHHFAGDQSQIFSPLGNGTWRQEYLLRSTITRAYEKGKGQTVQYDCRVGQLTNLYYDFSSGRLYSGNWLTGTISVSDPTTGKVERSLLHASTDGSFTHGLSTMTLGKQIFGFGFMDGRVGVILMSRQAETPRKFRYCLDSHADSVTCIDALTGDLPPTGEIGMVTGSDDGSVHCWDVKTGVSLQSFQFRSSQILSLCFRPKYKMLLVDTFNYELNSYQLYLIPGYARSRKNEQPILLSSRKCVLTDEEEPPCLMTADCCAGVAFLSRGAPKNCICRVSFKEFLEKNDNVGVQTSSIPLNGKPTSISLDTNDRVLSKSTPGRGARLLAVGDENGLVYVVNTRTEDPNKAILRTITAYSNFPITDIYLNEVAMVVGSASGYCGVYDTVTGNFLKKIASARNAARREPINCILLDSNPLSLKGVITMSKHVKSWSYTIPKPFVNKRSKVLPLRPSVTHDNLSKSSDYSKNEVEREIMLGLDQIAQERREKMEARQKFEQHFGEGLVGLSEEEIIAYVTMLSQEEEAKRMVQLSMDVDKIEEDFKENDEQATSSLNALSSNHEPPQEQANVAELNEQEQIELAMRLSLMEM.

Positions Met1–Arg16 are enriched in polar residues. A disordered region spans residues Met1 to Thr27. One can recognise an F-box domain in the interval Asn28 to Ala74. 3 WD repeats span residues Ser215 to Ser260, Phe263 to Arg302, and Thr429 to Lys468. Residues Ser581–Arg600 form the UIM 1 domain. A disordered region spans residues Glu617 to Leu645. Residues Gln621–Ala640 show a composition bias toward polar residues. The region spanning Asn646 to Met662 is the UIM 2 domain.

As to quaternary structure, part of a SCF (SKP1-cullin-F-box) protein ligase complex. Interacts with skp1.

The protein resides in the cytoplasm. In terms of biological role, probably recognizes and binds to some phosphorylated proteins and promotes their ubiquitination and degradation. The sequence is that of F-box/WD repeat-containing protein pof10 (pof10) from Schizosaccharomyces pombe (strain 972 / ATCC 24843) (Fission yeast).